Consider the following 418-residue polypeptide: Gamma-glutamyl phosphate reductase (418 aa).

Belongs to the gamma-glutamyl phosphate reductase family.

The protein resides in the cytoplasm. It carries out the reaction L-glutamate 5-semialdehyde + phosphate + NADP(+) = L-glutamyl 5-phosphate + NADPH + H(+). It functions in the pathway amino-acid biosynthesis; L-proline biosynthesis; L-glutamate 5-semialdehyde from L-glutamate: step 2/2. Catalyzes the NADPH-dependent reduction of L-glutamate 5-phosphate into L-glutamate 5-semialdehyde and phosphate. The product spontaneously undergoes cyclization to form 1-pyrroline-5-carboxylate. This Pelodictyon phaeoclathratiforme (strain DSM 5477 / BU-1) protein is Gamma-glutamyl phosphate reductase.